The primary structure comprises 633 residues: DNA-directed RNA polymerase subunit gamma (633 aa).

Zn(2+) is bound by residues C74, C76, C89, and C92. Mg(2+) is bound by residues D471, D473, and D475.

It belongs to the RNA polymerase beta' chain family. RpoC1 subfamily. As to quaternary structure, in cyanobacteria the RNAP catalytic core is composed of 2 alpha, 1 beta, 1 beta', 1 gamma and 1 omega subunit. When a sigma factor is associated with the core the holoenzyme is formed, which can initiate transcription. The cofactor is Mg(2+). Requires Zn(2+) as cofactor.

It carries out the reaction RNA(n) + a ribonucleoside 5'-triphosphate = RNA(n+1) + diphosphate. Its function is as follows. DNA-dependent RNA polymerase catalyzes the transcription of DNA into RNA using the four ribonucleoside triphosphates as substrates. The polypeptide is DNA-directed RNA polymerase subunit gamma (Prochlorococcus marinus (strain MIT 9211)).